An 870-amino-acid polypeptide reads, in one-letter code: LPS-assembly protein LptD (870 aa).

The first 25 residues, M1–A25, serve as a signal peptide directing secretion.

The protein belongs to the LptD family. Component of the lipopolysaccharide transport and assembly complex. Interacts with LptE and LptA.

The protein resides in the cell outer membrane. Together with LptE, is involved in the assembly of lipopolysaccharide (LPS) at the surface of the outer membrane. This is LPS-assembly protein LptD from Coxiella burnetii (strain RSA 493 / Nine Mile phase I).